A 214-amino-acid chain; its full sequence is Pyrrolidone-carboxylate peptidase (214 aa).

Catalysis depends on residues glutamate 78, cysteine 141, and histidine 165.

This sequence belongs to the peptidase C15 family. In terms of assembly, homotetramer.

It is found in the cytoplasm. It catalyses the reaction Release of an N-terminal pyroglutamyl group from a polypeptide, the second amino acid generally not being Pro.. Its function is as follows. Removes 5-oxoproline from various penultimate amino acid residues except L-proline. The polypeptide is Pyrrolidone-carboxylate peptidase (Streptococcus pneumoniae serotype 2 (strain D39 / NCTC 7466)).